A 347-amino-acid polypeptide reads, in one-letter code: uncharacterized protein (347 aa).

The N-terminal stretch at 1–21 (MRYRIFLLFFFALLPTSLVWA) is a signal peptide.

This is an uncharacterized protein from Escherichia coli (strain K12).